The chain runs to 201 residues: MYIGRFLVLGKTEEGYPFVTYRVSSRSFPNRVAKVMDDNTVAILPKELEEMFKNPYITYNCVKLVGDVAVATNGSHTDIIADKIKLGLPIRDALSYSLLTMDYEKDDYNTPRIAVVLTKDSAYMGYVTDSDVRIKKVELEAGKAYYLAVYEACNITKHQEISVTGKTAEEVTKFVMDYEKFEKPVTAATVLVKDGFKLATL.

Belongs to the archaeal IMP cyclohydrolase family.

It catalyses the reaction IMP + H2O = 5-formamido-1-(5-phospho-D-ribosyl)imidazole-4-carboxamide. The protein operates within purine metabolism; IMP biosynthesis via de novo pathway; IMP from 5-formamido-1-(5-phospho-D-ribosyl)imidazole-4-carboxamide: step 1/1. In terms of biological role, catalyzes the cyclization of 5-formylamidoimidazole-4-carboxamide ribonucleotide to IMP. The sequence is that of IMP cyclohydrolase from Methanococcus maripaludis (strain C6 / ATCC BAA-1332).